Consider the following 475-residue polypeptide: tRNA-2-methylthio-N(6)-dimethylallyladenosine synthase (475 aa).

Residues 1–21 (MTTAPTSPALPASSDTAPTGP) form a disordered region. The MTTase N-terminal domain occupies 24 to 145 (RGLHVITWGC…LPEMVARAAR (122 aa)). [4Fe-4S] cluster contacts are provided by Cys-33, Cys-69, Cys-108, Cys-186, Cys-190, and Cys-193. The Radical SAM core domain maps to 172–404 (TQGNLTAFLT…QALLREQQDA (233 aa)). One can recognise a TRAM domain in the interval 407 to 469 (ADMVGTVQEI…TNSLGGTLIR (63 aa)).

This sequence belongs to the methylthiotransferase family. MiaB subfamily. Monomer. Requires [4Fe-4S] cluster as cofactor.

The protein resides in the cytoplasm. The catalysed reaction is N(6)-dimethylallyladenosine(37) in tRNA + (sulfur carrier)-SH + AH2 + 2 S-adenosyl-L-methionine = 2-methylsulfanyl-N(6)-dimethylallyladenosine(37) in tRNA + (sulfur carrier)-H + 5'-deoxyadenosine + L-methionine + A + S-adenosyl-L-homocysteine + 2 H(+). In terms of biological role, catalyzes the methylthiolation of N6-(dimethylallyl)adenosine (i(6)A), leading to the formation of 2-methylthio-N6-(dimethylallyl)adenosine (ms(2)i(6)A) at position 37 in tRNAs that read codons beginning with uridine. In Gluconobacter oxydans (strain 621H) (Gluconobacter suboxydans), this protein is tRNA-2-methylthio-N(6)-dimethylallyladenosine synthase.